A 135-amino-acid polypeptide reads, in one-letter code: UPF0102 protein PGN_1801 (135 aa).

It belongs to the UPF0102 family.

In Porphyromonas gingivalis (strain ATCC 33277 / DSM 20709 / CIP 103683 / JCM 12257 / NCTC 11834 / 2561), this protein is UPF0102 protein PGN_1801.